Consider the following 271-residue polypeptide: MTTAGVSRRPGRLAGKAAIVTGAAGGIGRATVEAYLREGASVVAMDLAPRLAATRYEEPGAIPIACDLADRAAIDAAMADAVARLGGLDILVAGGALKGGTGNFLDLSDADWDRYVDVNMTGTFLTCRAGARAMVAAGAGKDGRSARIITIGSVNSFMAEPEAAAYVAAKGGVAMLTRAMAVDLARHGILVNMIAPGPVDVTGNNTGYSEPRLAEQVLDEVALGRPGLPEEVATAAVFLAEDGSSFITGSTITIDGGLSAMIFGGMREGRR.

NAD(+) is bound at residue 20–44 (VTGAAGGIGRATVEAYLREGASVVA). Position 153 (serine 153) interacts with substrate. The active-site Proton acceptor is tyrosine 166.

The protein belongs to the short-chain dehydrogenases/reductases (SDR) family.

The catalysed reaction is an N-acyl-D-mannosamine + NAD(+) = an N-acyl-D-mannosaminolactone + NADH + H(+). Functionally, acts on acetyl-D-mannosamine and glycolyl-D-mannosamine. In Flavobacterium sp. (strain 141-8), this protein is N-acylmannosamine 1-dehydrogenase.